Reading from the N-terminus, the 383-residue chain is 6-hydroxynicotinate 3-monooxygenase (383 aa).

An N-terminal signal peptide occupies residues 1–26 (MQGKPRIAVIGAGLGGTAGAALMARA). FAD contacts are provided by residues Gly-15, 34–35 (EQ), His-47, Arg-108, and Leu-130. His-47 serves as the catalytic Proton acceptor. Tyr-214 (proton acceptor) is an active-site residue. Residues Asp-293 and 306–307 (AA) contribute to the FAD site.

It belongs to the 6-hydroxynicotinate 3-monooxygenase family. As to quaternary structure, monomer. FAD is required as a cofactor.

The enzyme catalyses 6-hydroxynicotinate + NADH + O2 + 2 H(+) = 2,5-dihydroxypyridine + CO2 + NAD(+) + H2O. It participates in cofactor degradation; nicotinate degradation. With respect to regulation, competitively inhibited by 6-hydroxynicotinaldehyde. Its function is as follows. Flavin-dependent monooxygenase (FMO) that catalyzes the decarboxylative hydroxylation of 6-hydroxynicotinic acid (6-HNA) to 2,5-dihydroxypyridine (2,5-DHP) with concomitant oxidation of NADH, a step in the aerobic nicotinate degradation pathway. Is also active on the non-natural substrate 5-chloro-6-hydroxynicotinate, and is much less efficient on the substrate analog 4-hydroxybenzoate. This is 6-hydroxynicotinate 3-monooxygenase from Bordetella bronchiseptica (strain ATCC BAA-588 / NCTC 13252 / RB50) (Alcaligenes bronchisepticus).